The following is a 329-amino-acid chain: 2,3,4,5-tetrahydropyridine-2,6-dicarboxylate N-succinyltransferase (329 aa).

Residues aspartate 177 and glutamate 194 each coordinate Mg(2+). The active-site Acyl-anhydride intermediate is the glutamate 210. Residues arginine 212, glycine 227, serine 230, alanine 253, 268–269 (EA), glycine 276, lysine 288, and 301–304 (RRNS) contribute to the succinyl-CoA site.

Belongs to the type 2 tetrahydrodipicolinate N-succinyltransferase family. As to quaternary structure, homotrimer.

It is found in the cytoplasm. The catalysed reaction is (S)-2,3,4,5-tetrahydrodipicolinate + succinyl-CoA + H2O = (S)-2-succinylamino-6-oxoheptanedioate + CoA. The protein operates within amino-acid biosynthesis; L-lysine biosynthesis via DAP pathway; LL-2,6-diaminopimelate from (S)-tetrahydrodipicolinate (succinylase route): step 1/3. Catalyzes the conversion of the cyclic tetrahydrodipicolinate (THDP) into the acyclic N-succinyl-L-2-amino-6-oxopimelate using succinyl-CoA. The chain is 2,3,4,5-tetrahydropyridine-2,6-dicarboxylate N-succinyltransferase from Streptomyces coelicolor (strain ATCC BAA-471 / A3(2) / M145).